Here is a 262-residue protein sequence, read N- to C-terminus: MGRYDFRPLRVRQTAKALFDSKRNPNLPQWYEVVGNIPPGETLARPILRAPKVRHARKASKLFKPLPITYAEDKLRSDFFGDHPWELARPRLIVEDSGNDAKKYDWSKIVQPGKQLDGESVVQRQMWLMKHRNLSKASAYDAARQEFYAHRHRNEIRARIAKEEAQYVGAYFGKGPLEIGMELEDKSWEAWKRWANVQIEDEQAMRAQMFSGQSDEAPEGEGSDMSAGEYDMAVEELAGQGSIPNTPQSTVVPEGTSAPAHA.

The segment at 211-262 (SGQSDEAPEGEGSDMSAGEYDMAVEELAGQGSIPNTPQSTVVPEGTSAPAHA) is disordered. Over residues 242–251 (SIPNTPQSTV) the composition is skewed to polar residues.

This sequence belongs to the mitochondrion-specific ribosomal protein mS23 family. Component of the mitochondrial small ribosomal subunit.

It is found in the mitochondrion. The sequence is that of Small ribosomal subunit protein mS23 (RSM25) from Phaeosphaeria nodorum (strain SN15 / ATCC MYA-4574 / FGSC 10173) (Glume blotch fungus).